Here is a 77-residue protein sequence, read N- to C-terminus: Acyl carrier protein homolog (77 aa).

A Carrier domain is found at 1 to 76; the sequence is MSINIKDLIM…DLINAFEDVL (76 aa). Serine 36 is modified (O-(pantetheine 4'-phosphoryl)serine).

4'-phosphopantetheine is transferred from CoA to a specific serine of the apo-ACP-like protein.

It participates in lipid metabolism; fatty acid biosynthesis. Carrier of the growing fatty acid chain in fatty acid biosynthesis. This is Acyl carrier protein homolog from Ureaplasma parvum serovar 3 (strain ATCC 700970).